A 148-amino-acid chain; its full sequence is Large ribosomal subunit protein bL9 (148 aa).

Belongs to the bacterial ribosomal protein bL9 family.

Binds to the 23S rRNA. This chain is Large ribosomal subunit protein bL9, found in Parabacteroides distasonis (strain ATCC 8503 / DSM 20701 / CIP 104284 / JCM 5825 / NCTC 11152).